We begin with the raw amino-acid sequence, 1736 residues long: Collagen alpha-2(XI) chain (1736 aa).

A signal peptide spans 1 to 27 (MERCSRCHHLLLLVLLLLWLSAAPAWA). A Laminin G-like domain is found at 57-228 (DVAYRVSRPA…ESCDQKELEC (172 aa)). The interval 215-486 (QAAYESCDQK…ILQQARVALR (272 aa)) is nonhelical region. 2 disordered regions span residues 229 to 465 (EGGW…DKGP) and 485 to 1539 (LRGP…SPGG). The segment covering 258-270 (PQNQEPQAQSTES) has biased composition (polar residues). Residues 363–376 (ALSAETARSEAAAR) show a composition bias toward low complexity. Collagen-like domains are found at residues 399 to 447 (GPPG…GPPG), 487 to 545 (GPPG…ADGA), and 546 to 587 (RGMP…PPGE). Positions 400–413 (PPGPEGPAGFPGPP) are enriched in pro residues. The segment at 487–1500 (GPPGPMGYTG…PGHPGPPGEV (1014 aa)) is triple-helical region. Positions 515–533 (DLGPQGPRGPQGLMGPPGK) are enriched in low complexity. A compositionally biased stretch (pro residues) spans 615 to 624 (KGPPGIPGPP). The segment covering 650–663 (QQGTPGTQGLPGPQ) has biased composition (low complexity). The segment covering 765–774 (RGEDGPEGPK) has biased composition (basic and acidic residues). The span at 842–861 (PTGPRGQRGPRGATGKSGAK) shows a compositional bias: low complexity. Gly residues predominate over residues 994 to 1003 (GTAGGPGLKG). The segment covering 1029–1040 (IGPPGRPGPQGP) has biased composition (pro residues). Collagen-like domains lie at 1072 to 1127 (GPAG…ADGE) and 1128 to 1172 (PGAR…ETGD). Positions 1115–1133 (PVGQPGAAGADGEPGARGP) are enriched in low complexity. The segment covering 1176 to 1187 (MGPPGPPGPRGP) has biased composition (pro residues). Residues 1217–1230 (ESGSPGVQGEPGVK) show a composition bias toward low complexity. Basic and acidic residues-rich tracts occupy residues 1232–1241 (PRGERGEKGE) and 1287–1296 (DGAKGDRGED). Composition is skewed to low complexity over residues 1341–1364 (PGAV…KPGP) and 1376–1386 (QQGRPGATGQA). A compositionally biased stretch (pro residues) spans 1388-1397 (PPGPVGPPGL). Low complexity predominate over residues 1413–1422 (PGLIGLIGPP). The region spanning 1444–1499 (GETGIPGASGPIGPGGPPGLPGPAGPKGAKGATGPAGPKGEKGVQGPPGHPGPPGE) is the Collagen-like 6 domain. Over residues 1457–1467 (PGGPPGLPGPA) the composition is skewed to pro residues. A compositionally biased stretch (low complexity) spans 1469-1481 (PKGAKGATGPAGP). The propeptide at 1501–1736 (IQPLPIQMPK…VLLGPVCFMG (236 aa)) is C-terminal propeptide. The region spanning 1541 to 1735 (EEIFGSLDSL…GVLLGPVCFM (195 aa)) is the Fibrillar collagen NC1 domain. The cysteines at positions 1571 and 1603 are disulfide-linked. Positions 1589, 1591, 1592, 1594, and 1597 each coordinate Ca(2+). Residues Asn-1604 and Asn-1650 are each glycosylated (N-linked (GlcNAc...) asparagine). Cystine bridges form between Cys-1612-Cys-1733 and Cys-1655-Cys-1689.

Belongs to the fibrillar collagen family. As to quaternary structure, trimers composed of three different chains: alpha 1(XI), alpha 2(XI), and alpha 3(XI). Alpha 3(XI) is a post-translational modification of alpha 1(II). Alpha 1(V) can also be found instead of alpha 3(XI)=1(II). In terms of processing, prolines at the third position of the tripeptide repeating unit (G-X-Y) are hydroxylated in some or all of the chains.

The protein localises to the secreted. It localises to the extracellular space. Its subcellular location is the extracellular matrix. May play an important role in fibrillogenesis by controlling lateral growth of collagen II fibrils. The sequence is that of Collagen alpha-2(XI) chain (COL11A2) from Bos taurus (Bovine).